The chain runs to 105 residues: Met repressor (105 aa).

This sequence belongs to the MetJ family. In terms of assembly, homodimer.

It is found in the cytoplasm. Functionally, this regulatory protein, when combined with SAM (S-adenosylmethionine) represses the expression of the methionine regulon and of enzymes involved in SAM synthesis. This Hamiltonella defensa subsp. Acyrthosiphon pisum (strain 5AT) protein is Met repressor.